Consider the following 523-residue polypeptide: 2-isopropylmalate synthase (523 aa).

Residues 5–267 (VIIFDTTLRD…HTAINHQEIW (263 aa)) enclose the Pyruvate carboxyltransferase domain. Asp14, His202, His204, and Asn238 together coordinate Mn(2+). Positions 392–523 (RLDYFSVQSG…QHNENNKETV (132 aa)) are regulatory domain.

It belongs to the alpha-IPM synthase/homocitrate synthase family. LeuA type 1 subfamily. Homodimer. Mn(2+) serves as cofactor.

The protein localises to the cytoplasm. It catalyses the reaction 3-methyl-2-oxobutanoate + acetyl-CoA + H2O = (2S)-2-isopropylmalate + CoA + H(+). The protein operates within amino-acid biosynthesis; L-leucine biosynthesis; L-leucine from 3-methyl-2-oxobutanoate: step 1/4. Functionally, catalyzes the condensation of the acetyl group of acetyl-CoA with 3-methyl-2-oxobutanoate (2-ketoisovalerate) to form 3-carboxy-3-hydroxy-4-methylpentanoate (2-isopropylmalate). This chain is 2-isopropylmalate synthase, found in Shigella flexneri.